The sequence spans 716 residues: MMQESATETISNSSMNQNGMSTLSSQLDAGSRDGRSSGDTSSEVSTVELLHLQQQQALQAARQLLLQQQTSGLKSPKSSDKQRPLQVPVSVAMMTPQVITPQQMQQILQQQVLSPQQLQALLQQQQAVMLQQQQLQEFYKKQQEQLHLQLLQQQQQQQQQQQQQQQQQQQQQQQQQQQQQQQQQQQQQQQQQHPGKQAKEQQQQQQQQQQLAAQQLVFQQQLLQMQQLQQQQHLLSLQRQGLISIPPGQAALPVQSLPQAGLSPAEIQQLWKEVTGVHSMEDNGIKHGGLDLTTNNSSSTTSSTTSKASPPITHHSIVNGQSSVLNARRDSSSHEETGASHTLYGHGVCKWPGCESICEDFGQFLKHLNNEHALDDRSTAQCRVQMQVVQQLEIQLSKERERLQAMMTHLHMRPSEPKPSPKPLNLVSSVTMSKNMLETSPQSLPQTPTTPTAPVTPITQGPSVITPASVPNVGAIRRRHSDKYNIPMSSEIAPNYEFYKNADVRPPFTYATLIRQAIMESSDRQLTLNEIYSWFTRTFAYFRRNAATWKNAVRHNLSLHKCFVRVENVKGAVWTVDEVEYQKRRSQKITGSPTLVKNIPTSLGYGAALNASLQAALAESSLPLLSNPGLINNASSGLLQAVHEDLNGSLDHIDSNGNSSPGCSPQPHIHSIHVKEEPVIAEDEDCPMSLVTTANHSPELEDDREIEEEPLSEDLE.

Residues methionine 1 to aspartate 28 are compositionally biased toward polar residues. Disordered regions lie at residues methionine 1–serine 45 and lysine 286–serine 340. Residues threonine 293 to serine 306 are compositionally biased toward low complexity. Polar residues predominate over residues serine 316–leucine 325. A compositionally biased stretch (basic and acidic residues) spans alanine 327–glycine 338. The C2H2-type zinc finger occupies glycine 347 to histidine 372. The segment at valine 389–leucine 410 is leucine-zipper. The segment at proline 423–valine 427 is CTBP1-binding. The span at threonine 439 to glutamine 460 shows a compositional bias: low complexity. A disordered region spans residues threonine 439–threonine 466. The segment at residues arginine 505–leucine 595 is a DNA-binding region (fork-head). Disordered regions lie at residues leucine 650–isoleucine 669 and valine 679–glutamate 716. Over residues leucine 700–glutamate 716 the composition is skewed to acidic residues.

In terms of assembly, forms homodimers and heterodimers with FOXP1 and FOXP4. Dimerization is required for DNA-binding. Interacts with CTBP1. Interacts with FOXP1. Interacts with TBR1. Interacts with ZMYM2.

The protein localises to the nucleus. Its function is as follows. Transcriptional repressor that may play a role in the specification and differentiation of lung epithelium. May also play a role in developing neural, gastrointestinal and cardiovascular tissues. Can act with CTBP1 to synergistically repress transcription but CTPBP1 is not essential. Plays a role in synapse formation by regulating SRPX2 levels. The polypeptide is Forkhead box protein P2 (FOXP2) (Pan paniscus (Pygmy chimpanzee)).